Consider the following 778-residue polypeptide: Double zinc ribbon and ankyrin repeat-containing protein 1 (778 aa).

Ser179 and Ser201 each carry phosphoserine. 2 DZANK-type zinc fingers span residues 230 to 289 (CAHC…CVVC) and 359 to 407 (CSRC…GSCG). 2 ANK repeats span residues 631 to 662 (ENKL…DPNC) and 666 to 695 (QGRP…DIDQ). Position 768 is a phosphoserine (Ser768).

Interacts with NINL. Associates with DYNC1H1 and multiple dynein intermediate and light chains as well as actin-binding proteins.

It localises to the cytoplasm. It is found in the cytoskeleton. The protein resides in the microtubule organizing center. The protein localises to the centrosome. Its subcellular location is the cilium basal body. Its function is as follows. Involved in vesicle transport in photoreceptor cells. This Mus musculus (Mouse) protein is Double zinc ribbon and ankyrin repeat-containing protein 1 (Dzank1).